The primary structure comprises 206 residues: FMN-dependent NADH:quinone oxidoreductase (206 aa).

Residues Ser10, 16–18 (SSS), 93–96 (MYNF), and 137–140 (TRGG) contribute to the FMN site.

Belongs to the azoreductase type 1 family. In terms of assembly, homodimer. FMN is required as a cofactor.

It catalyses the reaction 2 a quinone + NADH + H(+) = 2 a 1,4-benzosemiquinone + NAD(+). It carries out the reaction N,N-dimethyl-1,4-phenylenediamine + anthranilate + 2 NAD(+) = 2-(4-dimethylaminophenyl)diazenylbenzoate + 2 NADH + 2 H(+). Quinone reductase that provides resistance to thiol-specific stress caused by electrophilic quinones. Functionally, also exhibits azoreductase activity. Catalyzes the reductive cleavage of the azo bond in aromatic azo compounds to the corresponding amines. In Psychromonas ingrahamii (strain DSM 17664 / CCUG 51855 / 37), this protein is FMN-dependent NADH:quinone oxidoreductase.